The following is a 1470-amino-acid chain: Roundabout homolog 2 (1470 aa).

Residues 1 to 21 form the signal peptide; sequence MNPLMFTLLLLFGFLCIQIDG. Over 22-863 the chain is Extracellular; it reads SRLRQEDFPP…EQITDVVKQP (842 aa). 5 consecutive Ig-like C2-type domains span residues 31–127, 133–220, 225–309, 318–413, and 422–508; these read PRIV…ASLE, DDFR…AELT, PTFL…ATLT, PQFV…LEVT, and PIIL…AVLD. The cysteines at positions 52 and 110 are disulfide-linked. A glycan (N-linked (GlcNAc...) asparagine) is linked at N123. Disulfide bonds link C154–C203, C246–C293, and C339–C395. N-linked (GlcNAc...) asparagine glycosylation occurs at N430. C443 and C492 are joined by a disulfide. 3 consecutive Fibronectin type-III domains span residues 528 to 622, 641 to 739, and 743 to 840; these read PPSK…TQDI, VVVR…TEEA, and PPQS…IGGR. 4 N-linked (GlcNAc...) asparagine glycosylation sites follow: N756, N786, N793, and N849. Residues 864-884 traverse the membrane as a helical segment; it reads AFIAGIGGACWVILMGFSIWL. Residues 885 to 1470 are Cytoplasmic-facing; the sequence is YWRRKKRKGL…GSNSQGQFTE (586 aa). Disordered stretches follow at residues 1036 to 1089, 1129 to 1159, 1190 to 1371, and 1383 to 1470; these read GFGY…LPGT, EDRVPTPPVRGVASSPAISFGQQSTATLTPS, IQSN…DCPA, and DWIN…QFTE. Polar residues predominate over residues 1144–1158; the sequence is PAISFGQQSTATLTP. Residue T1157 is modified to Phosphothreonine. At S1159 the chain carries Phosphoserine. Pro residues predominate over residues 1194–1203; sequence TPPPQPPAPP. The segment covering 1215 to 1231 has biased composition (acidic residues); that stretch reads LETDVPDEDADDEEEPL. Over residues 1243 to 1288 the composition is skewed to polar residues; it reads TPGSSMDNLDSSVTGKAFSSSQRQRPTSPFSTDSNTSAAQNQSQRP. Positions 1315–1325 are enriched in pro residues; the sequence is DLPPPPDPPPG. Residues 1328–1343 are compositionally biased toward polar residues; that stretch reads LRQQIGLSQHSGNVEN. Over residues 1413–1437 the composition is skewed to low complexity; that stretch reads SKPSFPSPGGHSSSGTSSSKGSTGP. Over residues 1461-1470 the composition is skewed to polar residues; that stretch reads GSNSQGQFTE.

Belongs to the immunoglobulin superfamily. ROBO family. In terms of assembly, interacts with SLIT2. In terms of tissue distribution, expressed in embryonal spinal cord.

The protein localises to the membrane. Its function is as follows. Receptor for SLIT2, and probably SLIT1, which are thought to act as molecular guidance cue in cellular migration, including axonal navigation at the ventral midline of the neural tube and projection of axons to different regions during neuronal development. In Mus musculus (Mouse), this protein is Roundabout homolog 2 (Robo2).